The following is a 291-amino-acid chain: N-acetylmannosamine kinase (291 aa).

Residues 5-12 (AIDIGGTK) and 132-139 (GVGGGVVC) each bind ATP. Residues His156, Cys166, Cys168, and Cys173 each coordinate Zn(2+).

This sequence belongs to the ROK (NagC/XylR) family. NanK subfamily. As to quaternary structure, homodimer.

The catalysed reaction is an N-acyl-D-mannosamine + ATP = an N-acyl-D-mannosamine 6-phosphate + ADP + H(+). It functions in the pathway amino-sugar metabolism; N-acetylneuraminate degradation; D-fructose 6-phosphate from N-acetylneuraminate: step 2/5. In terms of biological role, catalyzes the phosphorylation of N-acetylmannosamine (ManNAc) to ManNAc-6-P. The chain is N-acetylmannosamine kinase from Salmonella agona (strain SL483).